Consider the following 587-residue polypeptide: Phosphomethylpyrimidine synthase (587 aa).

The disordered stretch occupies residues 1 to 58 (MTPTQNEIHPKHSYSPIRKDGLEVPETEIRLDDSPSGPNEPFRIYRTRGPETNPKQGL). Residues 17 to 33 (IRKDGLEVPETEIRLDD) show a composition bias toward basic and acidic residues. Residues N180, M209, Y238, H274, 294–296 (SRG), 335–338 (DGLR), and E374 contribute to the substrate site. H378 contributes to the Zn(2+) binding site. Y401 is a substrate binding site. H442 serves as a coordination point for Zn(2+). The [4Fe-4S] cluster site is built by C522, C525, and C530.

Belongs to the ThiC family. The cofactor is [4Fe-4S] cluster.

The enzyme catalyses 5-amino-1-(5-phospho-beta-D-ribosyl)imidazole + S-adenosyl-L-methionine = 4-amino-2-methyl-5-(phosphooxymethyl)pyrimidine + CO + 5'-deoxyadenosine + formate + L-methionine + 3 H(+). Its pathway is cofactor biosynthesis; thiamine diphosphate biosynthesis. Catalyzes the synthesis of the hydroxymethylpyrimidine phosphate (HMP-P) moiety of thiamine from aminoimidazole ribotide (AIR) in a radical S-adenosyl-L-methionine (SAM)-dependent reaction. The protein is Phosphomethylpyrimidine synthase of Corynebacterium glutamicum (strain ATCC 13032 / DSM 20300 / JCM 1318 / BCRC 11384 / CCUG 27702 / LMG 3730 / NBRC 12168 / NCIMB 10025 / NRRL B-2784 / 534).